A 1186-amino-acid chain; its full sequence is MEVDTEEKRHRTRSKGVRVPVEPAIQELFSCPTPGCDGSGHVSGKYARHRSVYGCPLAKKRKTQDKQPQEPAPKRKPFAVKADSSSVDECDDSDGTEDMDEKEEDEGEEYSEDNDEPGDEDEEDEEGDREEEEEIEEEDEDDDEDGEDVEDEEEEEEEEEEEEEEEENEDHQMNCHNTRIMQDTEKDDNNNDEYDNYDELVAKSLLNLGKIAEDAAYRARTESEMNSNTSNSLEDDSDKNENLGRKSELSLDLDSDVVRETVDSLKLLAQGHGVVLSENMNDRNYADSMSQQDSRNMNYVMLGKPMNNGLMEKMVEESDEEVCLSSLECLRNQCFDLARKLSETNPQERNPQQNMNIRQHVRPEEDFPGRTPDRNYSDMLNLMRLEEQLSPRSRVFASCAKEDGCHERDDDTTSVNSDRSEEVFDMTKGNLTLLEKAIALETERAKAMREKMAMEAGRRDNMRSYEDQSPRQLPGEDRKPKSSDSHVKKPYYGKDPSRTEKKESKCPTPGCDGTGHVTGLYPHHRSLSGCPHKDRVPPEILAMHESVLKCPTPGCTGRGHVNSNRNSHRSLSGCPIAAAEKLAKAQEKHQSCDVSKSSQASDRVLRPMCFVKQLEIPQYGYRNNVPTTTPRSNLAKELEKYSKTSFEYNSYDNHTYGKRAIAPKVQTRDISPKGYDDAKRYCKDPSPSSSSTSSYAPSSSSNLSCGGGSSASSTCSKSSFDYTHDMEAAHMAATAILNLSTRCREMPQNLSTKPQDLCATRNPDMEVDENGTLDLSMNKQRPRDSCCPILTPLEPMSPQQQAVMNNRCFQLGEGDCWDLPVDYTKMKPRRIDEDESKDITPEDLDPFQEALEERRYPGEVTIPSPKPKYPQCKESKKDLITLSGCPLADKSIRSMLATSSQELKCPTPGCDGSGHITGNYASHRSLSGCPRAKKSGIRIAQSKEDKEDQEPIRCPVPGCDGQGHITGKYASHRSASGCPLAAKRQKDGYLNGSQFSWKSVKTEGMSCPTPGCDGSGHVSGSFLTHRSLSGCPRATSAMKKAKLSGEQMLTIKQRASNGIENDEEIKQLDEEIKELNESNSQMEADMIKLRTQITTMESNLKTIEEENKVIEQQNESLLHELANLSQSLIHSLANIQLPHMDPINEQNFDAYVTTLTEMYTNQDRYQSPENKALLENIKQAVRGIQV.

The segment at 1 to 21 (MEVDTEEKRHRTRSKGVRVPV) is disordered. Residues 22–65 (EPAIQELFSCPTPGCDGSGHVSGKYARHRSVYGCPLAKKRKTQD) form a CCHHC-type 1 zinc finger. The Zn(2+) site is built by C31, C36, H49, and C55. Disordered regions lie at residues 56–175 (PLAK…QMNC) and 220–247 (RTES…GRKS). Over residues 86 to 169 (SVDECDDSDG…EEEEEEEENE (84 aa)) the composition is skewed to acidic residues. The residue at position 250 (S250) is a Phosphoserine. Disordered stretches follow at residues 342–372 (SETN…GRTP) and 449–513 (REKM…GCDG). Over residues 343-357 (ETNPQERNPQQNMNI) the composition is skewed to polar residues. Basic and acidic residues-rich tracts occupy residues 361-372 (VRPEEDFPGRTP), 449-487 (REKM…DSHV), and 495-505 (DPSRTEKKESK). 2 CCHHC-type zinc fingers span residues 497–540 (SRTE…PPEI) and 541–584 (LAMH…KLAK). Residues C506, C511, H524, C530, C550, C555, H568, and C574 each coordinate Zn(2+). Disordered regions lie at residues 659–709 (RAIA…GGGS) and 753–780 (KPQD…MNKQ). A compositionally biased stretch (basic and acidic residues) spans 666–683 (QTRDISPKGYDDAKRYCK). The span at 685 to 709 (PSPSSSSTSSYAPSSSSNLSCGGGS) shows a compositional bias: low complexity. 3 consecutive CCHHC-type zinc fingers follow at residues 896–939 (LATS…GIRI), 945–988 (DKED…QKDG), and 998–1041 (KSVK…MKKA). The Zn(2+) site is built by C905, C910, H923, C929, C954, C959, H972, C978, C1007, C1012, H1025, and C1031. The stretch at 1056–1130 (SNGIENDEEI…LANLSQSLIH (75 aa)) forms a coiled coil.

The protein belongs to the MYT1 family. As to quaternary structure, interacts with SIN3B.

The protein resides in the nucleus. It is found in the chromosome. Its function is as follows. Transcription factor that plays a key role in neuronal differentiation by specifically repressing expression of non-neuronal genes during neuron differentiation. In contrast to other transcription repressors that inhibit specific lineages, mediates repression of multiple differentiation programs. Also represses expression of negative regulators of neurogenesis, such as members of the Notch signaling pathway, including HES1. The combination of three transcription factors, ASCL1, POU3F2/BRN2 and MYT1L, is sufficient to reprogram fibroblasts and other somatic cells into induced neuronal (iN) cells in vitro. Directly binds the 5'-AAGTT-3' core motif present on the promoter of target genes and represses transcription by recruiting a multiprotein complex containing SIN3B. The 5'-AAGTT-3' core motif is absent from the promoter of neural genes. The protein is Myelin transcription factor 1-like protein of Homo sapiens (Human).